A 226-amino-acid polypeptide reads, in one-letter code: Thioredoxin domain-containing protein 9 (226 aa).

The region spanning 75–180 (EIGSERDFFQ…TTETLEWRLG (106 aa)) is the Thioredoxin domain. A phosphoserine mark is found at Ser-188, Ser-221, and Ser-223.

As to quaternary structure, forms ternary complexes with the chaperonin TCP1 complex, spanning the cylindrical chaperonin cavity and contacting at least 2 subunits. In terms of tissue distribution, expressed in testis, liver, heart, kidney, brain, spleen and lung.

The protein resides in the cytoplasm. Its subcellular location is the nucleus. The protein localises to the cytoskeleton. It is found in the microtubule organizing center. It localises to the centrosome. The protein resides in the midbody. Significantly diminishes the chaperonin TCP1 complex ATPase activity, thus negatively impacts protein folding, including that of actin or tubulin. In Mus musculus (Mouse), this protein is Thioredoxin domain-containing protein 9 (Txndc9).